Consider the following 791-residue polypeptide: 1-phosphatidylinositol 4,5-bisphosphate phosphodiesterase delta-4 (791 aa).

The region spanning 16-124 (LLMQKGTMMR…WMQGLQLLVG (109 aa)) is the PH domain. A substrate binding region spans residues 26 to 53 (KVRSKSWKKLRFFRLQDDGMTVWHARQA). EF-hand domains are found at residues 134–169 (RLDQ…MNVE), 170–205 (MDQE…LTQR), and 207–237 (EVQE…EQKE). Positions 147, 149, 151, 153, 158, 183, 185, 187, 189, and 194 each coordinate Ca(2+). The GBA motif lies at 213 to 243 (EKFSSDGQKLTLLEFVDFLQEEQKEGERASD). The region spanning 290 to 435 (QDMTQPLNHY…LRGKILVKGK (146 aa)) is the PI-PLC X-box domain. Residue histidine 305 is part of the active site. Positions 306, 335, and 337 each coordinate Ca(2+). Histidine 350 is an active-site residue. Glutamate 384 provides a ligand contact to Ca(2+). Residues lysine 433, lysine 435, serine 551, and arginine 578 each contribute to the substrate site. One can recognise a PI-PLC Y-box domain in the interval 522-638 (LSALVVYLKA…GYVLKPDFLR (117 aa)). The 128-residue stretch at 638–765 (RDAQSSFHPE…QGYRHIHLLS (128 aa)) folds into the C2 domain. Isoleucine 679, aspartate 681, asparagine 705, aspartate 734, tyrosine 735, and aspartate 736 together coordinate Ca(2+). The PDZ-binding motif lies at 760 to 763 (HIHL).

As to quaternary structure, interacts with GRIP1. Interacts (via GBA motif) with guanine nucleotide-binding protein G(i) alpha subunit GNAI3 (inactive GDP-bound form); low-affinity interaction. Ca(2+) is required as a cofactor.

The protein resides in the membrane. It is found in the nucleus. It localises to the cytoplasm. Its subcellular location is the endoplasmic reticulum. The enzyme catalyses a 1,2-diacyl-sn-glycero-3-phospho-(1D-myo-inositol-4,5-bisphosphate) + H2O = 1D-myo-inositol 1,4,5-trisphosphate + a 1,2-diacyl-sn-glycerol + H(+). It carries out the reaction a 1,2-diacyl-sn-glycero-3-phospho-(1D-myo-inositol) + H2O = 1D-myo-inositol 1-phosphate + a 1,2-diacyl-sn-glycerol + H(+). In terms of biological role, hydrolyzes the phosphatidylinositol 4,5-bisphosphate (PIP2) to generate 2 second messenger molecules diacylglycerol (DAG) and inositol 1,4,5-trisphosphate (IP3). DAG mediates the activation of protein kinase C (PKC), while IP3 releases Ca(2+) from intracellular stores. Required for acrosome reaction in sperm during fertilization, probably by acting as an important enzyme for intracellular Ca(2+) mobilization in the zona pellucida-induced acrosome reaction. May play a role in cell growth. Modulates the liver regeneration in cooperation with nuclear PKC. Overexpression up-regulates the Erk signaling pathway and proliferation. The polypeptide is 1-phosphatidylinositol 4,5-bisphosphate phosphodiesterase delta-4 (PLCD4) (Bos taurus (Bovine)).